Consider the following 203-residue polypeptide: Thymidylate kinase (203 aa).

10 to 17 (GVEGSGKT) serves as a coordination point for ATP.

The protein belongs to the thymidylate kinase family.

It carries out the reaction dTMP + ATP = dTDP + ADP. Functionally, phosphorylation of dTMP to form dTDP in both de novo and salvage pathways of dTTP synthesis. The protein is Thymidylate kinase of Carboxydothermus hydrogenoformans (strain ATCC BAA-161 / DSM 6008 / Z-2901).